The chain runs to 104 residues: Gastrin (104 aa).

The signal sequence occupies residues Met-1–Ala-21. A propeptide spanning residues Ser-22–Arg-58 is cleaved from the precursor. The disordered stretch occupies residues Phe-27–His-67. Residues Arg-40–Arg-49 show a composition bias toward basic and acidic residues. The residue at position 59 (Gln-59) is a Pyrrolidone carboxylic acid; in form big gastrin. Gln-76 bears the Pyrrolidone carboxylic acid; in form gastrin mark. Tyr-87 bears the Sulfotyrosine; partial mark. A Phenylalanine amide modification is found at Phe-92. Ser-96 is subject to Phosphoserine. A propeptide spanning residues Ser-96–Pro-104 is cleaved from the precursor.

Belongs to the gastrin/cholecystokinin family. In terms of processing, sulfation enhances proteolytic processing, and blocks peptide degradation. Levels of sulfation differ between proteolytically-cleaved gastrins. Thus, gastrin-6 is almost 73% sulfated, whereas the larger gastrins are less than 50% sulfated. Sulfation levels are also tissue-specific.

The protein resides in the secreted. Functionally, gastrin stimulates the stomach mucosa to produce and secrete hydrochloric acid and the pancreas to secrete its digestive enzymes. It also stimulates smooth muscle contraction and increases blood circulation and water secretion in the stomach and intestine. The protein is Gastrin (GAST) of Sus scrofa (Pig).